We begin with the raw amino-acid sequence, 329 residues long: MTLSIYDDIFKQFPTIDEWSEPNEKIILEPFTYLGIITAKELPSMLIKAFNYWYQVPPPVLDLILKVVGPFHAATLLIDDIQDDSELRGGIPVAHKVYGVAQTINSANYVYFEAYQNISKLTPYLKSPETTDLWSMFNDEILALHRGQGLELYWRDTFTCPTEEEYLRMVHNKTGGMFRVAIKLMKALSPVQSLPDYFPLVNIIGILVQIRDDLLNLSPAFTKHKGYCEDLSEGKFGFPLIHSIKADSSNTLLMDILKLRPKDVPTKRKALKYMNDQTKSLDYTFDVICKLEKTAKDELKKLGGNPELSSIFELIHLSSTPDIEEKYKS.

2 residues coordinate Mg(2+): Asp-79 and Asp-83.

This sequence belongs to the FPP/GGPP synthase family. Mg(2+) is required as a cofactor.

It carries out the reaction (2E)-geranyl diphosphate + H2O = linalool + diphosphate. It catalyses the reaction (2E,6E)-farnesyl diphosphate + H2O = (6E)-nerolidol + diphosphate. Functionally, terpene synthase that shows monoterpene synthase activity and produces linalool, using geranyl diphosphate (GPP) as substrate. Also shows sesquiterpene synthase activity as it is able to convert farnesyl diphosphate (FPP) into (E)-nerolidol. The sequence is that of IDS-like terpene synthase 1 from Melampsora lini (Rust fungus).